Reading from the N-terminus, the 211-residue chain is ATP-dependent Clp protease proteolytic subunit (211 aa).

Residue serine 114 is the Nucleophile of the active site. Histidine 139 is a catalytic residue.

This sequence belongs to the peptidase S14 family. Fourteen ClpP subunits assemble into 2 heptameric rings which stack back to back to give a disk-like structure with a central cavity, resembling the structure of eukaryotic proteasomes.

The protein resides in the cytoplasm. It catalyses the reaction Hydrolysis of proteins to small peptides in the presence of ATP and magnesium. alpha-casein is the usual test substrate. In the absence of ATP, only oligopeptides shorter than five residues are hydrolyzed (such as succinyl-Leu-Tyr-|-NHMec, and Leu-Tyr-Leu-|-Tyr-Trp, in which cleavage of the -Tyr-|-Leu- and -Tyr-|-Trp bonds also occurs).. Functionally, cleaves peptides in various proteins in a process that requires ATP hydrolysis. Has a chymotrypsin-like activity. Plays a major role in the degradation of misfolded proteins. This chain is ATP-dependent Clp protease proteolytic subunit, found in Pseudomonas fluorescens (strain Pf0-1).